Reading from the N-terminus, the 442-residue chain is Ribosome biogenesis protein NOP53 (442 aa).

Positions Lys-242–Val-264 are disordered.

Belongs to the NOP53 family.

It localises to the nucleus. It is found in the nucleolus. The protein resides in the nucleoplasm. In terms of biological role, may play a role in ribosome biogenesis. In Arabidopsis thaliana (Mouse-ear cress), this protein is Ribosome biogenesis protein NOP53.